Here is a 132-residue protein sequence, read N- to C-terminus: MSINDPIGDLITRIRNAQMRRKDKTSTPGSRLRASLLDVLRDEGYIRGYTTTDHGNGRTEFEIELKYFDGQPVIREITRVSKPGRRVYASVKALPRVANGLGIAVLSTPQGVMADHDARDKNVGGEVLCTVF.

It belongs to the universal ribosomal protein uS8 family. In terms of assembly, part of the 30S ribosomal subunit. Contacts proteins S5 and S12.

One of the primary rRNA binding proteins, it binds directly to 16S rRNA central domain where it helps coordinate assembly of the platform of the 30S subunit. The chain is Small ribosomal subunit protein uS8 from Azorhizobium caulinodans (strain ATCC 43989 / DSM 5975 / JCM 20966 / LMG 6465 / NBRC 14845 / NCIMB 13405 / ORS 571).